A 1357-amino-acid polypeptide reads, in one-letter code: Regulator of V-ATPase in vacuolar membrane protein 1 (1357 aa).

WD repeat units lie at residues 98-134, 142-182, 190-239, 384-423, 431-470, 595-636, 638-679, and 898-939; these read HDDT…GVYQ, KQPK…GEQA, PHPK…KNHT, GHNK…HGVS, QTES…KEDS, INTG…LEYE, TFHN…YTNN, and QKSI…RIAY. The interval 1243-1357 is disordered; sequence GSPSASDIES…ITKNLLDDFV (115 aa). S1244 and S1248 each carry phosphoserine. Low complexity predominate over residues 1272–1288; that stretch reads STSSNSLAQSSSSAPRS. Positions 1320–1332 are enriched in basic and acidic residues; the sequence is SENRKDKLSKDIL.

In terms of assembly, component of the RAVE complex composed of RAV1, RAV2 and CBF3D/SKP1. Within the complex, it interacts directly with RAV2 and CBF3D. Interacts with the V-ATPase V1 subunits VMA1, VMA2 and VMA8.

It localises to the endomembrane system. Functionally, component of the RAVE complex, which is required for stable assembly of the vacuolar ATPase complex V-ATPase under many conditions. Required for transport between the early endosome and the late endosome/prevacuolar compartment (PVC), suggesting that assembly of vacuolar ATPase at the early endosome is required for transport from the early endosome to the PVC. The sequence is that of Regulator of V-ATPase in vacuolar membrane protein 1 (RAV1) from Saccharomyces cerevisiae (strain ATCC 204508 / S288c) (Baker's yeast).